Reading from the N-terminus, the 170-residue chain is MTQPLDDAASAIFGPRLELAQCYADWLGTAGVERGLLGPREVDRLWERHVLNSAVIGELLDHGERVVDIGSGAGLPALPLAIARHDLQVVLLEPMLRRVEFLQEVVTDLGLAVEVVRGRAEERSVRERLGGSDAAVSRAVAALDKLAKWSMPLLKREGRMLAIKRGASSR.

Residues Gly70, Leu75, 120-121 (AE), and Arg138 contribute to the S-adenosyl-L-methionine site.

The protein belongs to the methyltransferase superfamily. RNA methyltransferase RsmG family.

It is found in the cytoplasm. Functionally, specifically methylates the N7 position of guanine in position 518 of 16S rRNA. The sequence is that of Ribosomal RNA small subunit methyltransferase G from Mycobacterium ulcerans (strain Agy99).